The sequence spans 466 residues: Asparagine--tRNA ligase (466 aa).

Belongs to the class-II aminoacyl-tRNA synthetase family. In terms of assembly, homodimer.

The protein resides in the cytoplasm. It catalyses the reaction tRNA(Asn) + L-asparagine + ATP = L-asparaginyl-tRNA(Asn) + AMP + diphosphate + H(+). This is Asparagine--tRNA ligase from Photorhabdus laumondii subsp. laumondii (strain DSM 15139 / CIP 105565 / TT01) (Photorhabdus luminescens subsp. laumondii).